The following is a 153-amino-acid chain: 3-hydroxyacyl-[acyl-carrier-protein] dehydratase FabZ (153 aa).

His54 is a catalytic residue.

Belongs to the thioester dehydratase family. FabZ subfamily.

It localises to the cytoplasm. It carries out the reaction a (3R)-hydroxyacyl-[ACP] = a (2E)-enoyl-[ACP] + H2O. Functionally, involved in unsaturated fatty acids biosynthesis. Catalyzes the dehydration of short chain beta-hydroxyacyl-ACPs and long chain saturated and unsaturated beta-hydroxyacyl-ACPs. The sequence is that of 3-hydroxyacyl-[acyl-carrier-protein] dehydratase FabZ from Shewanella pealeana (strain ATCC 700345 / ANG-SQ1).